The primary structure comprises 855 residues: Valine--tRNA ligase (855 aa).

A 'HIGH' region motif is present at residues 42–52 (PTISGKLHIGH). The 'KMSKS' region signature appears at 574–578 (KMSKS). Lysine 577 lines the ATP pocket.

It belongs to the class-I aminoacyl-tRNA synthetase family. ValS type 2 subfamily. In terms of assembly, monomer.

The protein resides in the cytoplasm. The enzyme catalyses tRNA(Val) + L-valine + ATP = L-valyl-tRNA(Val) + AMP + diphosphate. Catalyzes the attachment of valine to tRNA(Val). As ValRS can inadvertently accommodate and process structurally similar amino acids such as threonine, to avoid such errors, it has a 'posttransfer' editing activity that hydrolyzes mischarged Thr-tRNA(Val) in a tRNA-dependent manner. This chain is Valine--tRNA ligase, found in Wolbachia sp. subsp. Brugia malayi (strain TRS).